A 608-amino-acid polypeptide reads, in one-letter code: MCGIVGIVGNQPVSERLVEALKRLEYRGYDSAGVATIDAGTLQRRRAEGKLVNLESRLREEPLAGTIGIAHTRWATHGAPTERNAHPHFTEGVAVVHNGIIENFAELKDELAAGGAEFQTETDTEVVAHLLTKYRRDGLGRREAMHAMLKRVKGAYALAVLFEDDPSTIMAARNGPPLAIGHGSGEMFLGSDAIALAPFTNEITYLIDGDWAVIGKTGVHIFDFDGNVVERPRQISTAAAFLVDKGNHRHFMEKEIYEQPEVIAHALGHYVNFIENRVVPISDAIDFGKVPSLAISACGTAYLAGLIGKYWFERYARLPVEIDVASEFRYREIPLSPQSAALFISQSGETADTLASLRYCKEHGLKIGAVVNARESTIARESDAVFPILAGPEIGVASTKAFTCQLAVLAALAVGAGKARGTISGEEEQALVKSLAEMPRIMGQVLNSIQPKIESLSRELSKCHDVLYLGRGTSFPLAMEGALKLKEISYIHAEGYAAGELKHGPIALIDENMPVIVIAPHDRFFDKTVSNMQEVAARGGRIILITDEKGAAASKLDTMHTIVLPEVDEIIAPMIFSLPLQLLAYHTAVFMGTDVDQPRNLAKSVTVE.

Catalysis depends on Cys2, which acts as the Nucleophile; for GATase activity. Residues 2–217 (CGIVGIVGNQ…DGDWAVIGKT (216 aa)) form the Glutamine amidotransferase type-2 domain. SIS domains follow at residues 281 to 422 (ISDA…ARGT) and 456 to 598 (LSRE…VDQP). Lys603 acts as the For Fru-6P isomerization activity in catalysis.

The protein resides in the cytoplasm. The catalysed reaction is D-fructose 6-phosphate + L-glutamine = D-glucosamine 6-phosphate + L-glutamate. Involved in the production of the root hair deformation (HAD) factor specifically on medicago. The polypeptide is Glutamine--fructose-6-phosphate aminotransferase [isomerizing] (nodM) (Rhizobium meliloti (strain 1021) (Ensifer meliloti)).